Reading from the N-terminus, the 458-residue chain is UDP-N-acetylmuramoylalanine--D-glutamate ligase (458 aa).

124 to 130 provides a ligand contact to ATP; that stretch reads GSDGKTT.

The protein belongs to the MurCDEF family.

The protein localises to the cytoplasm. It catalyses the reaction UDP-N-acetyl-alpha-D-muramoyl-L-alanine + D-glutamate + ATP = UDP-N-acetyl-alpha-D-muramoyl-L-alanyl-D-glutamate + ADP + phosphate + H(+). It functions in the pathway cell wall biogenesis; peptidoglycan biosynthesis. Cell wall formation. Catalyzes the addition of glutamate to the nucleotide precursor UDP-N-acetylmuramoyl-L-alanine (UMA). The polypeptide is UDP-N-acetylmuramoylalanine--D-glutamate ligase (Clostridium botulinum (strain Kyoto / Type A2)).